The sequence spans 436 residues: GTPase Der (436 aa).

2 consecutive EngA-type G domains span residues 4–167 (PIVA…GEEE) and 176–351 (IRLS…ENHK). Residues 10–17 (GRPNVGKS), 57–61 (DTGGI), 119–122 (NKVD), 182–189 (GRPNVGKS), 229–233 (DTAGM), and 294–297 (NKWD) each bind GTP. Residues 352 to 436 (KRVQSSTLNE…PIHIIARKRN (85 aa)) form the KH-like domain.

The protein belongs to the TRAFAC class TrmE-Era-EngA-EngB-Septin-like GTPase superfamily. EngA (Der) GTPase family. As to quaternary structure, associates with the 50S ribosomal subunit.

GTPase that plays an essential role in the late steps of ribosome biogenesis. The sequence is that of GTPase Der from Staphylococcus aureus (strain USA300).